The following is a 1076-amino-acid chain: MASQDSDEALPANYKDYPDGSLLRVVFHNFLTYEHTSFLPTASLNMILGHNGSGKSSIICGICLACGGSPKSLGRSERIVEYIRHGCTEGYVEIAIADKQKGPQVVRLTIRVGEQPKYRLNDSATTQSEIADLRKHYNIQIDNPCAFLAQDKVKSFSEQSSIELLRNTEKAASADLDQQHIDLMKQREDSTSIEDKCTTSENAIKRLEDEIGKIMPLVENYRKKLALQSKLRLLEKKMKIMEFEKFDREYKAELQNMDGAMIEYREVEKSIAECEKHRKNLEDRIKKDRSQISQMQRSCNEILAKVQEKGDKKLMEDMMQRAKAKLESAKKAADQHEKDVEKARKMIDQARARLQEAVDTLNGYEEFQSEMKSLEQKYSTAERDSRQEEDAIQKKSYEMRQLENKKRDEEQNSQLNRQDRYRVLQNFSSDASKAYRWYQQNRSQFKGDVYMPIMDMVLKTPEAAKALENSVGVRDRTMFVCCYKEDELLINGKQHSWRINTSVVPAEKIYSEDIDAQLPSELSRLGFKYLVSNCFDAPAPLKQFLCNVSGLNRIPFGGSDVEKKIAEVSQAIEQTRYSVFLTANIRCQNSKSRYANNTLQSQSATREANTWRDQFFKVSPVAKRTDNSILEEIQKLKAEIDIRSEQLREKRGAIQKERDVLRQEQMQWKSKKQVHTKWKTELASEMAKLEALENEVVDISAIEEEYANVEKKAILETKKMLENSIRWHKEIIDKHRLIGIFELSESICKSRVNKSNSEAETHRSKLEDLKSVKDAAEDLLKTALNHKKAAASALMKECSLKTLDESKMSPAENKIYSSLVKMFEEADVPTDMNTLDQAITSEKTRLKLAEDSGEDGSIVHEQRLKVLDDDLVLEKTRQEKLIENRARIHDKLGDEINNWRKEVETMIEQINVNYVQFFDSLGCRGEVSLEVPENPLDIEKYGIMIMVCFRKGESMKRLDNKVQSGGERSVATMLYLLALQQLCPVPFRCIDEINQGMDPTNERKVFDIMVGMWNGTTGTLSKTQYFLLSPKLLHGLDMRENVNIVMVNSTLTNSHGKHYDTSAKIDATFAKMGISA.

49 to 56 (GHNGSGKS) is an ATP binding site. A coiled-coil region spans residues 190-415 (STSIEDKCTT…KRDEEQNSQL (226 aa)). Positions 375-410 (EQKYSTAERDSRQEEDAIQKKSYEMRQLENKKRDEE) are enriched in basic and acidic residues. The interval 375–420 (EQKYSTAERDSRQEEDAIQKKSYEMRQLENKKRDEEQNSQLNRQDR) is disordered. The flexible hinge stretch occupies residues 416–617 (NRQDRYRVLQ…ANTWRDQFFK (202 aa)). 2 coiled-coil regions span residues 627–713 (NSIL…EKKA) and 749–786 (KSRVNKSNSEAETHRSKLEDLKSVKDAAEDLLKTALNH).

This sequence belongs to the SMC family. SMC5 subfamily. In terms of assembly, interacts with smc-6. In terms of tissue distribution, expressed in the germline (at protein level).

It localises to the nucleus. Its subcellular location is the chromosome. In terms of biological role, core component of the smc-5/smc-6 complex. Functions in DNA double strand break repair by promoting sister-chromatid homologous recombination during meiosis. Acts in a DNA repair pathway for removal of ionizing radiation- and ultraviolet (UV) radiation-induced DNA lesions that is distinct from classical nucleotide excision repair and the translesion synthesis pathway. Also involved in the recovery of stalled replication forks. The protein is Structural maintenance of chromosomes protein 5 of Caenorhabditis elegans.